A 136-amino-acid polypeptide reads, in one-letter code: General odorant-binding protein 57d (136 aa).

The N-terminal stretch at 1-29 is a signal peptide; the sequence is MPEKMSLRLVPHLACIIFILEIQFRIADS. 3 disulfides stabilise this stretch: Cys33/Cys70, Cys66/Cys118, and Cys107/Cys127.

The protein belongs to the PBP/GOBP family.

In terms of biological role, present in the aqueous fluid surrounding olfactory sensory dendrites and are thought to aid in the capture and transport of hydrophobic odorants into and through this fluid. This Drosophila melanogaster (Fruit fly) protein is General odorant-binding protein 57d.